A 107-amino-acid chain; its full sequence is FK506-binding protein 1 (107 aa).

In terms of domain architecture, PPIase FKBP-type spans 19 to 107; sequence GSNVTVHHAG…VFEVELITFK (89 aa).

The protein belongs to the FKBP-type PPIase family.

It catalyses the reaction [protein]-peptidylproline (omega=180) = [protein]-peptidylproline (omega=0). With respect to regulation, inhibited by both FK506 and rapamycin. Its function is as follows. PPIases accelerate the folding of proteins by catalyzing the cis-trans isomerization of proline imidic peptide bonds in oligopeptides. This Dictyostelium discoideum (Social amoeba) protein is FK506-binding protein 1 (fkbp1).